Reading from the N-terminus, the 448-residue chain is MMITLRKLPLAVAVMAGIFAAQASAVDFKGYARSGIGWTGSGGEQQCFQATGAGAKYRLGNECETYAELKLGQEVWKEGDKSFYFDTNVAYSVAQQNDWEATSPAFREANVQGKNLIDALPGSTIWAGKRFYQRHDVHMIDFYYWDISGPGAGIENVDLGFGKLSVAATRSSEAGGSATFQSDSIYDYNKSTANDVFDVRLGSLEVNPGGTLELGVDYGRANARDDYYLADDATKDGWMFTAEHVQTIGTGFNKFVVQYATDALTSQGKGLSQGSGIGISDTDPKFAYAQNNNGHMLRLIDHGSISMGDRWDMMYVGMYQDIDWDNNNGTRWWTVGVRPMFKWTPIMSTLLEVGYDNVKSQRTDETNNQYKITLAQQWQAGDSIWSRPALRVFATYAKWDEKWGYDKTGNPSNNANYGYAVKDGFNGGSFGRGDNDEWTFGAQMEIWW.

Residues Met-1–Ala-25 form the signal peptide.

This sequence belongs to the porin LamB (TC 1.B.3) family. In terms of assembly, homotrimer formed of three 18-stranded antiparallel beta-barrels, containing three independent channels.

It is found in the cell outer membrane. The enzyme catalyses beta-maltose(in) = beta-maltose(out). Its function is as follows. Involved in the transport of maltose and maltodextrins. The polypeptide is Maltoporin (Cronobacter sakazakii (strain ATCC BAA-894) (Enterobacter sakazakii)).